The following is a 458-amino-acid chain: Ammonium transporter Rh type B (458 aa).

At 1–13 (MAGSPSRAAGRRL) the chain is on the cytoplasmic side. The chain crosses the membrane as a helical span at residues 14-34 (QLPLLCLFLQGATAVLFAVFV). Residues 35–61 (RYNHKTDAALWHRSNHSNADNEFYFRY) lie on the Extracellular side of the membrane. An N-linked (GlcNAc...) asparagine glycan is attached at Asn-49. The helical transmembrane segment at 62–82 (PSFQDVHAMVFVGFGFLMVFL) threads the bilayer. Residues 83 to 86 (QRYG) are Cytoplasmic-facing. Residues 87–107 (FSSVGFTFLLAAFALQWSTLV) form a helical membrane-spanning segment. The Extracellular segment spans residues 108–124 (QGFLHSFHGGHIHVGVE). The helical transmembrane segment at 125 to 145 (SMINADFCAGAVLISFGAVLG) threads the bilayer. Topologically, residues 146 to 149 (KTGP) are cytoplasmic. The chain crosses the membrane as a helical span at residues 150–170 (TQLLLMALLEVVLFGINEFVL). Topologically, residues 171 to 178 (LHLLGVRD) are extracellular. A helical transmembrane segment spans residues 179-201 (AGGSMTIHTFGAYFGLVLSRVLY). The Cytoplasmic portion of the chain corresponds to 202–219 (RPQLEKSKHRQGSVYHSD). Residues 220–240 (LFAMIGTIFLWIFWPSFNAAL) form a helical membrane-spanning segment. Topologically, residues 241–251 (TALGAGQHRTA) are extracellular. Residues 252–272 (LNTYYSLAASTLGTFALSALV) form a helical membrane-spanning segment. Topologically, residues 273-282 (GEDGRLDMVH) are cytoplasmic. The chain crosses the membrane as a helical span at residues 283 to 303 (IQNAALAGGVVVGTSSEMMLT). A topological domain (extracellular) is located at residue Pro-304. Residues 305–325 (FGALAAGFLAGTVSTLGYKFF) form a helical membrane-spanning segment. The Cytoplasmic portion of the chain corresponds to 326–346 (TPILESKFKVQDTCGVHNLHG). Residues 347–367 (MPGVLGALLGVLVAGLATHEA) traverse the membrane as a helical segment. The Extracellular segment spans residues 368 to 393 (YGDGLESVFPLIAEGQRSATSQAMHQ). Residues 394–414 (LFGLFVTLMFASVGGGLGGLL) traverse the membrane as a helical segment. Residues 415–458 (LKLPFLDSPPDSQHYEDQVHWQVPGEHEDKAQRPLRVEEADTQA) lie on the Cytoplasmic side of the membrane. An interaction with ANK3 region spans residues 416–424 (KLPFLDSPP). Residues 436–458 (QVPGEHEDKAQRPLRVEEADTQA) are disordered.

Belongs to the ammonium transporter (TC 2.A.49) family. Rh subfamily. As to quaternary structure, interacts (via C-terminus) with ANK2 and ANK3; required for targeting to the basolateral membrane. In terms of processing, N-glycosylated. As to expression, specifically expressed in kidney. Also detected in liver and ovary.

It localises to the cell membrane. The protein resides in the basolateral cell membrane. It carries out the reaction NH4(+)(in) = NH4(+)(out). The catalysed reaction is methylamine(out) = methylamine(in). It catalyses the reaction CO2(out) = CO2(in). Ammonium transporter involved in the maintenance of acid-base homeostasis. Transports ammonium and its related derivative methylammonium across the basolateral plasma membrane of epithelial cells likely contributing to renal transepithelial ammonia transport and ammonia metabolism. May transport either NH4(+) or NH3 ammonia species predominantly mediating an electrogenic NH4(+) transport. May act as a CO2 channel providing for renal acid secretion. This chain is Ammonium transporter Rh type B, found in Homo sapiens (Human).